The primary structure comprises 746 residues: Ferrienterobactin receptor (746 aa).

Positions M1 to A22 are cleaved as a signal peptide. A TonB box motif is present at residues D34–A41. Residues E42–K169 enclose the TBDR plug domain. The disordered stretch occupies residues G76–I96. Residues L79–Q93 are compositionally biased toward polar residues. In terms of domain architecture, TBDR beta-barrel spans E174–F746. The TonB C-terminal box motif lies at Y729–F746.

Belongs to the TonB-dependent receptor family.

It is found in the cell outer membrane. Functionally, this protein is involved in the initial step of iron uptake by binding ferrienterobactin (Fe-ENT), an iron chelatin siderophore that allows E.coli to extract iron from the environment. FepA also acts as a receptor for colicins B and D. This chain is Ferrienterobactin receptor (fepA), found in Escherichia coli (strain K12).